The sequence spans 61 residues: uncharacterized protein (61 aa).

The stretch at 24 to 60 (WMRYESERDEKLRMLERMRDELEAELEEIKREIERLR) forms a coiled coil.

This is an uncharacterized protein from Archaeoglobus fulgidus (strain ATCC 49558 / DSM 4304 / JCM 9628 / NBRC 100126 / VC-16).